Consider the following 301-residue polypeptide: GTPase Era (301 aa).

Residues 6–173 (KSGFVAIVGR…LEQTNANLEI (168 aa)) enclose the Era-type G domain. The segment at 14–21 (GRPNVGKS) is G1. Position 14-21 (14-21 (GRPNVGKS)) interacts with GTP. The interval 40–44 (QTTRN) is G2. Positions 61–64 (DTPG) are G3. Residues 61–65 (DTPGI) and 123–126 (NKID) each bind GTP. A G4 region spans residues 123–126 (NKID). Residues 152–154 (ISA) are G5. Residues 204–282 (TREEVPHSVA…FLEIWVKVQK (79 aa)) form the KH type-2 domain.

The protein belongs to the TRAFAC class TrmE-Era-EngA-EngB-Septin-like GTPase superfamily. Era GTPase family. As to quaternary structure, monomer.

The protein localises to the cytoplasm. Its subcellular location is the cell membrane. An essential GTPase that binds both GDP and GTP, with rapid nucleotide exchange. Plays a role in 16S rRNA processing and 30S ribosomal subunit biogenesis and possibly also in cell cycle regulation and energy metabolism. This chain is GTPase Era, found in Listeria monocytogenes serotype 4b (strain F2365).